The following is a 957-amino-acid chain: Glycine dehydrogenase (decarboxylating) (957 aa).

Position 708 is an N6-(pyridoxal phosphate)lysine (K708).

This sequence belongs to the GcvP family. As to quaternary structure, the glycine cleavage system is composed of four proteins: P, T, L and H. The cofactor is pyridoxal 5'-phosphate.

The enzyme catalyses N(6)-[(R)-lipoyl]-L-lysyl-[glycine-cleavage complex H protein] + glycine + H(+) = N(6)-[(R)-S(8)-aminomethyldihydrolipoyl]-L-lysyl-[glycine-cleavage complex H protein] + CO2. The glycine cleavage system catalyzes the degradation of glycine. The P protein binds the alpha-amino group of glycine through its pyridoxal phosphate cofactor; CO(2) is released and the remaining methylamine moiety is then transferred to the lipoamide cofactor of the H protein. The protein is Glycine dehydrogenase (decarboxylating) of Pectobacterium atrosepticum (strain SCRI 1043 / ATCC BAA-672) (Erwinia carotovora subsp. atroseptica).